The sequence spans 150 residues: D-aminoacyl-tRNA deacylase (150 aa).

A Gly-cisPro motif, important for rejection of L-amino acids motif is present at residues 138–139; that stretch reads GP.

Belongs to the DTD family. Homodimer.

The protein resides in the cytoplasm. The enzyme catalyses glycyl-tRNA(Ala) + H2O = tRNA(Ala) + glycine + H(+). It catalyses the reaction a D-aminoacyl-tRNA + H2O = a tRNA + a D-alpha-amino acid + H(+). Its function is as follows. An aminoacyl-tRNA editing enzyme that deacylates mischarged D-aminoacyl-tRNAs. Also deacylates mischarged glycyl-tRNA(Ala), protecting cells against glycine mischarging by AlaRS. Acts via tRNA-based rather than protein-based catalysis; rejects L-amino acids rather than detecting D-amino acids in the active site. By recycling D-aminoacyl-tRNA to D-amino acids and free tRNA molecules, this enzyme counteracts the toxicity associated with the formation of D-aminoacyl-tRNA entities in vivo and helps enforce protein L-homochirality. The sequence is that of D-aminoacyl-tRNA deacylase from Thermosipho melanesiensis (strain DSM 12029 / CIP 104789 / BI429).